The chain runs to 150 residues: UPF0178 protein ECA0873 (150 aa).

The protein belongs to the UPF0178 family.

The polypeptide is UPF0178 protein ECA0873 (Pectobacterium atrosepticum (strain SCRI 1043 / ATCC BAA-672) (Erwinia carotovora subsp. atroseptica)).